Reading from the N-terminus, the 326-residue chain is Glutamine synthetase (326 aa).

In terms of domain architecture, GS beta-grasp spans 4–85 (FKLEYIWLDG…VMCEVMMPDG (82 aa)). A GS catalytic domain is found at 83-326 (PDGHAHASNA…GDPYQIVRRF (244 aa)). Positions 107 and 109 each coordinate Mg(2+). Residue E164 coordinates ATP. The Mg(2+) site is built by E169 and E176. E275 serves as a coordination point for L-glutamate.

Belongs to the glutamine synthetase family. Homooctamer and homotetramer. Mg(2+) serves as cofactor.

It localises to the cytoplasm. It carries out the reaction L-glutamate + NH4(+) + ATP = L-glutamine + ADP + phosphate + H(+). Its activity is regulated as follows. Transferase activity is inhibited by NH(4)Cl. Catalyzes the ATP-dependent biosynthesis of glutamine from glutamate and ammonia. This is Glutamine synthetase from Rhizobium leguminosarum bv. phaseoli.